Reading from the N-terminus, the 242-residue chain is UDP-2,3-diacylglucosamine hydrolase (242 aa).

Mn(2+)-binding residues include Asp7, His9, Asp40, Asn78, and His113. 78–79 (NR) contributes to the substrate binding site. The substrate site is built by Asp121, Ser159, Thr163, Lys166, and His194. Positions 194 and 196 each coordinate Mn(2+).

It belongs to the LpxH family. The cofactor is Mn(2+).

Its subcellular location is the cell inner membrane. It catalyses the reaction UDP-2-N,3-O-bis[(3R)-3-hydroxytetradecanoyl]-alpha-D-glucosamine + H2O = 2-N,3-O-bis[(3R)-3-hydroxytetradecanoyl]-alpha-D-glucosaminyl 1-phosphate + UMP + 2 H(+). It participates in glycolipid biosynthesis; lipid IV(A) biosynthesis; lipid IV(A) from (3R)-3-hydroxytetradecanoyl-[acyl-carrier-protein] and UDP-N-acetyl-alpha-D-glucosamine: step 4/6. Its function is as follows. Hydrolyzes the pyrophosphate bond of UDP-2,3-diacylglucosamine to yield 2,3-diacylglucosamine 1-phosphate (lipid X) and UMP by catalyzing the attack of water at the alpha-P atom. Involved in the biosynthesis of lipid A, a phosphorylated glycolipid that anchors the lipopolysaccharide to the outer membrane of the cell. The chain is UDP-2,3-diacylglucosamine hydrolase from Ectopseudomonas mendocina (strain ymp) (Pseudomonas mendocina).